Here is an 804-residue protein sequence, read N- to C-terminus: MSADSENETSESSPAGEATASTSALPDEPLILLPVRNAVLFPGMVLPFTAGRGQVKEDVQAAVKRQQPLGVVLQRDPRVQDPTFDDLNTIGTVANVVRYVTSPEDGAHHLICQGVERFRLIAPVEGLGFRAARVEFLPETTARNPAVDARALVLRQRAGEMIGLLPNAGGELVRALDAIELPGLLADTIAGLLDIPPERKQEILETLDVCKRLDKVLDAVAGRIEVLRLSQEIGEQTRGRIDQRQREMMLREQLRTIQNELGENIESREEVRKLTEAIEAAHMPPEVESHARKELGRLERMPEASSEYSISVSYLEWLTELPWPLPAEAPIDIARARQILDEAHFGLDKVKRRILEYLGVRKLNPHGKAPILCFLGPPGVGKTSLGQSIARALERPFVRVSLGGVHDEAEIRGHRRTYIGAMPGNIIQAIRKAGARNCVMLLDELDKLGQGVHGDPAAAMLEVLDPEQNASFRDNYLGVPFDLSAIVFVATANQIEGIAGPLRDRMEILDLPGYTEAEKFQIAQRFLVPRQLEACGLTAAQCELPDETLRAIIRDYTREAGVRSLERQIGAVFRYVALRVAEDPSTHERIEPDRLSSILGHRRFESEVAMRTSLPGVVTGLAWTPVGGDLLFIEASSTPGGGRLVLTGQLGDVMKESVQAALTLVKSRCESLHIDCSNFDKRDIHVHVPAGAVPKDGPSAGVAMFIAIASLLMGRAVRSDCAVTGEISLRGIVLPVGGIKEKVLAALRGGIKTVLLPARNAPDLEDIPVDARNQMRFVLLETVDDAVREIIEDESVTSSRNVDI.

The segment at 1–23 (MSADSENETSESSPAGEATASTS) is disordered. A Lon N-terminal domain is found at 30–224 (LILLPVRNAV…KVLDAVAGRI (195 aa)). An ATP-binding site is contributed by 376–383 (GPPGVGKT). One can recognise a Lon proteolytic domain in the interval 612-793 (TSLPGVVTGL…DDAVREIIED (182 aa)). Active-site residues include Ser699 and Lys742.

It belongs to the peptidase S16 family. In terms of assembly, homohexamer. Organized in a ring with a central cavity.

It localises to the cytoplasm. The enzyme catalyses Hydrolysis of proteins in presence of ATP.. ATP-dependent serine protease that mediates the selective degradation of mutant and abnormal proteins as well as certain short-lived regulatory proteins. Required for cellular homeostasis and for survival from DNA damage and developmental changes induced by stress. Degrades polypeptides processively to yield small peptide fragments that are 5 to 10 amino acids long. Binds to DNA in a double-stranded, site-specific manner. This Paraburkholderia phytofirmans (strain DSM 17436 / LMG 22146 / PsJN) (Burkholderia phytofirmans) protein is Lon protease.